A 128-amino-acid chain; its full sequence is MADDGVNPKAFPLADTNLSQKLMDLVQQAMNYKQLKKGANEATKTLNRGISEIIVMAADAEPLEILLHLPLLCEDKNVPYVFVRSKAALGRACGVTRPVIAASITQNEGSQLKSQIQKIKEDVEKLLI.

This sequence belongs to the eukaryotic ribosomal protein eL8 family.

It localises to the nucleus. The protein localises to the nucleolus. Functionally, binds to the 5'-stem-loop of U4 snRNA and may play a role in the late stage of spliceosome assembly. The protein undergoes a conformational change upon RNA-binding. The chain is Small nuclear ribonucleoprotein associated homolog 13 from Caenorhabditis elegans.